Consider the following 100-residue polypeptide: Thioredoxin (100 aa).

The Thioredoxin domain maps to 1 to 100; the sequence is MKHITNKAEL…PKNELKELLK (100 aa). Cysteines 29 and 32 form a disulfide.

It belongs to the thioredoxin family.

Functionally, participates in various redox reactions through the reversible oxidation of its active center dithiol to a disulfide and catalyzes dithiol-disulfide exchange reactions. This Mycoplasmoides gallisepticum (strain R(low / passage 15 / clone 2)) (Mycoplasma gallisepticum) protein is Thioredoxin (trxA).